Reading from the N-terminus, the 601-residue chain is MKNQNKFDPVFPLSSEQLNNLKELERTCTNIQSAWLSGYFWKIANQTSNITSFQTNESEKNDPVITIISASQTGNAKLLSKRLYEYFNKNNKISRLIDAMDYKFKKIKDEKILILIISTQGEGEPPEEALSFYKFIMSKNAPNLNNLYYSVFGLGDTSYNLFCQAGKDFDKRFKELGGNSLLDRFDADIEYEDNYNKWSQDLLQSINSKEKIYKSSVSYIDQENTLILSKNHYTKKNPAEGIILTNQKITGRNSKKDVHHIEIDISNLNIKYSPGDALGVWYKNDSNLVKNILELLSINISETITIKNDVITIFDALQNHFELTNNTKNIIKSYANFSKNKFLKDIISNDSDLENYTINTPLIKMIHDHPLKLSSQQLIGLLRPLTPRLYSISSSQEEIDNEIHITVGVVKKLISGHVYLGGASGYLSQSLKSDDIIKIFIQTNDNFRLPINKNTPIIMISSGTGIAPFRAFMQQRDNDNADGKNWLFFGNPNFTEDFLYQVEWQKYIKKGLITNMNLAWSQDQKNKIYVQDRIRENSQEIWSWIEEGAQIYVCGNASKMAKDVEKALLDIISHNAHLNLEESQEFLNNLRLNKRYKRDVY.

Positions 65 to 203 (ITIISASQTG…NYNKWSQDLL (139 aa)) constitute a Flavodoxin-like domain. FMN contacts are provided by residues 71 to 76 (SQTGNA), 118 to 121 (STQG), and 154 to 163 (LGDTSYNLFC). The region spanning 236 to 450 (KNPAEGIILT…IQTNDNFRLP (215 aa)) is the FAD-binding FR-type domain. Residues Thr-324, Ile-358, 388–391 (RLYS), 406–408 (TVG), and 421–424 (GGAS) contribute to the FAD site. Residues 521 to 522 (SQ), 527 to 531 (KIYVQ), and Asp-563 contribute to the NADP(+) site. Residue Tyr-601 coordinates FAD.

This sequence belongs to the NADPH-dependent sulphite reductase flavoprotein subunit CysJ family. It in the N-terminal section; belongs to the flavodoxin family. In the C-terminal section; belongs to the flavoprotein pyridine nucleotide cytochrome reductase family. Alpha(8)-beta(8). The alpha component is a flavoprotein, the beta component is a hemoprotein. FAD is required as a cofactor. Requires FMN as cofactor.

It catalyses the reaction hydrogen sulfide + 3 NADP(+) + 3 H2O = sulfite + 3 NADPH + 4 H(+). Its pathway is sulfur metabolism; hydrogen sulfide biosynthesis; hydrogen sulfide from sulfite (NADPH route): step 1/1. Its function is as follows. Component of the sulfite reductase complex that catalyzes the 6-electron reduction of sulfite to sulfide. This is one of several activities required for the biosynthesis of L-cysteine from sulfate. The flavoprotein component catalyzes the electron flow from NADPH -&gt; FAD -&gt; FMN to the hemoprotein component. The sequence is that of Sulfite reductase [NADPH] flavoprotein alpha-component from Buchnera aphidicola subsp. Acyrthosiphon pisum (strain APS) (Acyrthosiphon pisum symbiotic bacterium).